Reading from the N-terminus, the 418-residue chain is Glutamate dehydrogenase (418 aa).

The active site involves Lys-105. Residue 217-223 (GYGNVGY) coordinates NAD(+).

The protein belongs to the Glu/Leu/Phe/Val dehydrogenases family. As to quaternary structure, homohexamer.

Its subcellular location is the cytoplasm. The catalysed reaction is L-glutamate + NAD(+) + H2O = 2-oxoglutarate + NH4(+) + NADH + H(+). It catalyses the reaction L-glutamate + NADP(+) + H2O = 2-oxoglutarate + NH4(+) + NADPH + H(+). The chain is Glutamate dehydrogenase (gdhA) from Aeropyrum pernix (strain ATCC 700893 / DSM 11879 / JCM 9820 / NBRC 100138 / K1).